The primary structure comprises 667 residues: Small ribosomal subunit protein mS39 (667 aa).

The transit peptide at Met1–His11 directs the protein to the mitochondrion. Positions Glu199–Asp226 are disordered. PPR repeat units follow at residues Asn249–Ala283, Asp284–Pro323, Asn324–Pro360, Ser361–Pro400, Ser482–Asn516, and Thr565–Pro599.

This sequence belongs to the mitochondrion-specific ribosomal protein mS39 family.

It localises to the mitochondrion. Functionally, mitochondrial RNA-binding protein that may have a role in mitochondrial translation. This Danio rerio (Zebrafish) protein is Small ribosomal subunit protein mS39 (ptcd3).